We begin with the raw amino-acid sequence, 239 residues long: Transcriptional regulatory protein DcuR (239 aa).

A Response regulatory domain is found at 3–121 (NVLIIDDDAM…RFEEALTGWR (119 aa)). Asp56 is subject to 4-aspartylphosphate. The segment at residues 181–200 (TDELANEVNISRVSCRKYLI) is a DNA-binding region (H-T-H motif).

In terms of processing, phosphorylated and activated by DcuS.

It is found in the cytoplasm. In terms of biological role, member of the two-component regulatory system DcuR/DcuS. Involved in the C4-dicarboxylate-stimulated regulation of the genes encoding the anaerobic fumarate respiratory system (frdABCD; nuoAN; dcuB; dcuC; sdhCDAB; etc.). Weakly regulates the aerobic C4-dicarboxylate transporter dctA. In Escherichia coli O157:H7, this protein is Transcriptional regulatory protein DcuR (dcuR).